The primary structure comprises 308 residues: GTPase Era (308 aa).

The Era-type G domain maps to 9 to 179 (RAGFVALIGE…RAWLGASLPE (171 aa)). Residues 17-24 (GEPNAGKS) form a G1 region. 17 to 24 (GEPNAGKS) contacts GTP. Residues 43 to 47 (QTTRA) are G2. The tract at residues 64–67 (DTPG) is G3. GTP is bound by residues 64 to 68 (DTPGL) and 129 to 132 (NKID). The G4 stretch occupies residues 129–132 (NKID). The tract at residues 158 to 160 (ISA) is G5. Residues 210–287 (LHQELPYQLT…HLFLQVKVRP (78 aa)) form the KH type-2 domain.

It belongs to the TRAFAC class TrmE-Era-EngA-EngB-Septin-like GTPase superfamily. Era GTPase family. In terms of assembly, monomer.

It is found in the cytoplasm. The protein localises to the cell inner membrane. An essential GTPase that binds both GDP and GTP, with rapid nucleotide exchange. Plays a role in 16S rRNA processing and 30S ribosomal subunit biogenesis and possibly also in cell cycle regulation and energy metabolism. In Dinoroseobacter shibae (strain DSM 16493 / NCIMB 14021 / DFL 12), this protein is GTPase Era.